The sequence spans 365 residues: Eukaryotic translation initiation factor 3 subunit H (365 aa).

In terms of domain architecture, MPN spans 11 to 160 (VKVEALVVMK…LRAFRLSPKF (150 aa)).

Belongs to the eIF-3 subunit H family. In terms of assembly, component of the eukaryotic translation initiation factor 3 (eIF-3) complex.

The protein resides in the cytoplasm. In terms of biological role, component of the eukaryotic translation initiation factor 3 (eIF-3) complex, which is involved in protein synthesis of a specialized repertoire of mRNAs and, together with other initiation factors, stimulates binding of mRNA and methionyl-tRNAi to the 40S ribosome. The eIF-3 complex specifically targets and initiates translation of a subset of mRNAs involved in cell proliferation. The sequence is that of Eukaryotic translation initiation factor 3 subunit H from Aspergillus terreus (strain NIH 2624 / FGSC A1156).